Reading from the N-terminus, the 454-residue chain is C4-dicarboxylate transport protein (454 aa).

Transmembrane regions (helical) follow at residues 33 to 53, 66 to 86, 101 to 121, 148 to 168, 170 to 190, 210 to 230, 243 to 263, 354 to 374, and 377 to 397; these read VQVLAAIAAGILLGHFYPDIG, LVKMIIAPVIFLTVATGIAGM, IYFLAFSTLALLVGLVVANLV, EQSITGFLMNIIPTTLVGAFA, GDILQVLFISVLFGISLAIVG, LVAILMKAAPIGAFGAMAFTI, MLIGTFYLTSFLFVFVVLGAV, LLLVAMLSSKGAAGITGAGFI, and AATLSVVPSVPVAGMALILGI.

The protein belongs to the dicarboxylate/amino acid:cation symporter (DAACS) (TC 2.A.23) family.

It is found in the cell inner membrane. In terms of biological role, responsible for the transport of dicarboxylates such as succinate, fumarate, and malate from the periplasm across the membrane. This chain is C4-dicarboxylate transport protein, found in Sinorhizobium medicae (strain WSM419) (Ensifer medicae).